Here is a 35-residue protein sequence, read N- to C-terminus: Photosystem II reaction center protein M (35 aa).

The chain crosses the membrane as a helical span at residues 7-27 (GFIASILFVLVPTVFLLILFI).

It belongs to the PsbM family. PSII is composed of 1 copy each of membrane proteins PsbA, PsbB, PsbC, PsbD, PsbE, PsbF, PsbH, PsbI, PsbJ, PsbK, PsbL, PsbM, PsbT, PsbX, PsbY, PsbZ, Psb30/Ycf12, peripheral proteins PsbO, CyanoQ (PsbQ), PsbU, PsbV and a large number of cofactors. It forms dimeric complexes.

It is found in the cellular thylakoid membrane. In terms of biological role, one of the components of the core complex of photosystem II (PSII). PSII is a light-driven water:plastoquinone oxidoreductase that uses light energy to abstract electrons from H(2)O, generating O(2) and a proton gradient subsequently used for ATP formation. It consists of a core antenna complex that captures photons, and an electron transfer chain that converts photonic excitation into a charge separation. This subunit is found at the monomer-monomer interface. The sequence is that of Photosystem II reaction center protein M from Microcystis aeruginosa (strain NIES-843 / IAM M-2473).